The sequence spans 298 residues: uncharacterized protein (298 aa).

The protein localises to the cytoplasm. It localises to the nucleus. This is an uncharacterized protein from Schizosaccharomyces pombe (strain 972 / ATCC 24843) (Fission yeast).